The following is a 516-amino-acid chain: MLRIPGKSLGYHEDISLTPWQAILASVIVLLGLKVATILYTAFYNVFLHPLRRFPGPVTWIAAPWMKSISHIRGQQDHQIVKLHQKLGHIIRVGPDTLSFTEMSAWRDIYGTGHAELPKHIYKGSGMEERPNIITAHSRDHHRFRKAMTPALTPEAITHEEALIKGYVDMLIEHLHKFAKSSDPYVNVSQWYTMTTFDIFGDLCYGESFNSLATGKQHLWLKSMSSMKVLVPLLVFPYISWLLVWWLLSPEQQRSLSDHQKRSYELTMKRIANRDTHPRHDFMTFMLRNRGEDQGVTDHELASNSDIVISAGSETTSTALTGITFFLCSNPDAMARCAKEVREAFKSDDEITFKATAELPFMLACIEETLRMYPPVPTSLIRRTLPGRPTLIAGELIPENTIVGVHHLATYRSERNFFDAKAFRPERWLAETRNDPKSPFKDDRLDAVRPFSYGPRNCIGRNLAYHEMRLILAKLLWHFDLKLKPGYEDWGFKQRTFQLWEKPKLVVEFKERQFQV.

A helical membrane pass occupies residues 23 to 43 (ILASVIVLLGLKVATILYTAF). An N-linked (GlcNAc...) asparagine glycan is attached at Asn-187. A helical transmembrane segment spans residues 229 to 249 (VLVPLLVFPYISWLLVWWLLS). Cys-458 lines the heme pocket.

It belongs to the cytochrome P450 family. It depends on heme as a cofactor.

It localises to the membrane. It functions in the pathway secondary metabolite biosynthesis. In terms of biological role, cytochrome P450 monooxygenase; part of the gene cluster that mediates the biosynthesis of destruxins, insecticidal cyclic hexadepsipeptides which induce flaccid paralysis and visceral muscle contraction in insects through targeting the calcium channels and vacuolar-type ATPases. The aldo-keto reductase dtxS3 converts alpha-ketoisocaproic acid from deaminated leucine into alpha-hydroxyisocaproic acid (HIC), which is the first substrate for destruxin assembly by dtxS1. L-aspartate decarboxylase dtxS4 converts aspartic acid into beta-alanine, the last substrate for the destruxin assembly line performed by dtxS1. The nonribosomal peptide synthetase dtxS1 synthesizes destruxins B and B2, whereas the cytochrome P450 monooxygenase dtxS2 is required to convert destruxin B into other destruxin derivatives, including destructins C, D, A and E. Destruxin E-diol (ED) is further produced in a non-enzymatic manner from destruxin E. Destruxins play an important role in virulence and escape from insect host immune defenses. The chain is Cytochrome P450 monooxygenase dtxS2 from Metarhizium robertsii (strain ARSEF 23 / ATCC MYA-3075) (Metarhizium anisopliae (strain ARSEF 23)).